The sequence spans 94 residues: Co-chaperonin GroES (94 aa).

Belongs to the GroES chaperonin family. In terms of assembly, heptamer of 7 subunits arranged in a ring. Interacts with the chaperonin GroEL.

It localises to the cytoplasm. Together with the chaperonin GroEL, plays an essential role in assisting protein folding. The GroEL-GroES system forms a nano-cage that allows encapsulation of the non-native substrate proteins and provides a physical environment optimized to promote and accelerate protein folding. GroES binds to the apical surface of the GroEL ring, thereby capping the opening of the GroEL channel. In Limosilactobacillus reuteri (strain DSM 20016) (Lactobacillus reuteri), this protein is Co-chaperonin GroES.